A 235-amino-acid polypeptide reads, in one-letter code: MTKAQNVDPSEIKKFEEMASRWWDLEGEFKPLHQINPLRLNYVLEKADGLFGKKVLDVGCGGGILAESMAKEGATVTGLDMGKEPLEVARLHALETGTKLTYIQSTIEDHAAENAGTYDVVTCMEMLEHVPDPLSVIRSCAALVKPGGHVFFSTLNRNIKSYLFAIVGAEKLLKIVPEGTHDHEKFIKPAEMMKMIDQTDLTEMGITGLHYNPLNDSYKLGRNVDVNYIVHTKKY.

S-adenosyl-L-methionine contacts are provided by Arg39, Gly59, Asp80, and Met124.

The protein belongs to the methyltransferase superfamily. UbiG/COQ3 family.

It carries out the reaction a 3-demethylubiquinol + S-adenosyl-L-methionine = a ubiquinol + S-adenosyl-L-homocysteine + H(+). The catalysed reaction is a 3-(all-trans-polyprenyl)benzene-1,2-diol + S-adenosyl-L-methionine = a 2-methoxy-6-(all-trans-polyprenyl)phenol + S-adenosyl-L-homocysteine + H(+). It functions in the pathway cofactor biosynthesis; ubiquinone biosynthesis. In terms of biological role, O-methyltransferase that catalyzes the 2 O-methylation steps in the ubiquinone biosynthetic pathway. The chain is Ubiquinone biosynthesis O-methyltransferase from Vibrio parahaemolyticus serotype O3:K6 (strain RIMD 2210633).